The primary structure comprises 804 residues: Mechanosensitive cation channel TMEM63A (804 aa).

Topologically, residues 1–51 (MTSSPFLDPWPSKAVFVRERLGLGERPNDSYCYNSAKNSTVLQGVTFGGIP) are extracellular. N38 carries N-linked (GlcNAc...) asparagine glycosylation. Residues 52 to 74 (TVLLLDVSCFLFLILVFSIIRRR) traverse the membrane as a helical segment. Over 75-133 (FWDYGRIALVSEAGSEARFQRLSSSSSGQQDFENELGCCPWLTAIFRLHDDQILEWCGE) the chain is Cytoplasmic. The chain crosses the membrane as a helical span at residues 134–166 (DAIHYLSFQRHIIFLLVVISFLSLCVILPVNLS). The Extracellular segment spans residues 167–190 (GDLLGKDPYSFGRTTIANLQTDND). The helical transmembrane segment at 191–216 (LLWLHTVFSVIYLFLTVGFMWHHTRS) threads the bilayer. At 217–415 (IRYKEESLVR…CWKNLSIQGV (199 aa)) the chain is on the cytoplasmic side. Residues 218–413 (RYKEESLVRQ…DICWKNLSIQ (196 aa)) are intracellular linker IL2; confers mechanosensitivity. A helical membrane pass occupies residues 416–443 (RWWLQWLGINFSLFVVLFFLTTPSIIMS). At 444–461 (TMDKFNVTKPIHALNNPV) the chain is on the extracellular side. N449 carries N-linked (GlcNAc...) asparagine glycosylation. Residues 462 to 489 (ISQFFPTLLLWSFSALLPSIVYYSTLLE) form a helical membrane-spanning segment. At 490 to 494 (SHWTR) the chain is on the cytoplasmic side. Residues 495 to 531 (SGENRIMVSKVYIFLIFMVLILPSLGLTSLDFFFRWL) form a helical membrane-spanning segment. The Extracellular segment spans residues 532–553 (FDKTSSETSIRLECVFLPDQGA). The helical transmembrane segment at 554–585 (FFVNYVIASAFIGSGMELLRLPGLILYTFRMI) threads the bilayer. Residues 554–585 (FFVNYVIASAFIGSGMELLRLPGLILYTFRMI) form a gating helix region. Topologically, residues 586–605 (MAKTAADRRNVKQNQAFEYE) are cytoplasmic. Residues 606 to 623 (FGAMYAWMLCVFTVIMAY) traverse the membrane as a helical segment. Over 624-627 (SITC) the chain is Extracellular. A helical transmembrane segment spans residues 628 to 650 (PIIVPFGLIYILLKHMVDRHNLY). Residues 651–660 (FAYLPAKLEK) lie on the Cytoplasmic side of the membrane. The chain crosses the membrane as a helical span at residues 661-688 (RIHFAAVNQALAAPILCLFWLFFFSFLR). Topologically, residues 689 to 693 (LGLTA) are extracellular. Residues 694 to 708 (PATLFTFLVVLLTIL) form a helical membrane-spanning segment. Over 709-804 (ACLLYTCFGC…GTAAYAYQES (96 aa)) the chain is Cytoplasmic. Residue S738 is modified to Phosphoserine.

It belongs to the CSC1 (TC 1.A.17) family. Monomer. Post-translationally, N-Glycosylated.

Its subcellular location is the lysosome membrane. The protein resides in the early endosome membrane. The protein localises to the cell membrane. The catalysed reaction is Ca(2+)(in) = Ca(2+)(out). In terms of biological role, mechanosensitive cation channel with low conductance and high activation threshold. In contrast to TMEM63B, does not show phospholipid scramblase activity. Acts as a regulator of lysosomal morphology by mediating lysosomal mechanosensitivity. Important for the baby's first breath and respiration throughout life. Upon lung inflation conducts cation currents in alveolar type 1 and 2 cells triggering lamellar body exocytosis and surfactant secretion into airspace. Also acts as an osmosensitive cation channel preferentially activated by hypotonic stress. The protein is Mechanosensitive cation channel TMEM63A of Mus musculus (Mouse).